A 198-amino-acid polypeptide reads, in one-letter code: Thymidine kinase (198 aa).

ATP-binding positions include 15-22 (GCMFSGKT) and 87-90 (DEAQ). The active-site Proton acceptor is glutamate 88. Positions 144, 147, 182, and 185 each coordinate Zn(2+).

Belongs to the thymidine kinase family. Homotetramer.

The protein localises to the cytoplasm. It carries out the reaction thymidine + ATP = dTMP + ADP + H(+). The sequence is that of Thymidine kinase from Coprothermobacter proteolyticus (strain ATCC 35245 / DSM 5265 / OCM 4 / BT).